A 70-amino-acid chain; its full sequence is Cytochrome c oxidase subunit 8B, mitochondrial (70 aa).

A mitochondrion-targeting transit peptide spans 1 to 24 (MPRLPPILRLLQAPEKYTVIPKAR). Topologically, residues 25–35 (ISSKPAKSPTS) are mitochondrial matrix. Residues 36-59 (AMDQAVGMSVIIAGFMVPAGWVLS) form a helical membrane-spanning segment. Over 60–70 (HLESYKRSSAA) the chain is Mitochondrial intermembrane.

The protein belongs to the cytochrome c oxidase VIII family. As to quaternary structure, component of the cytochrome c oxidase (complex IV, CIV), a multisubunit enzyme composed of 14 subunits. The complex is composed of a catalytic core of 3 subunits MT-CO1, MT-CO2 and MT-CO3, encoded in the mitochondrial DNA, and 11 supernumerary subunits COX4I, COX5A, COX5B, COX6A, COX6B, COX6C, COX7A, COX7B, COX7C, COX8 and NDUFA4, which are encoded in the nuclear genome. The complex exists as a monomer or a dimer and forms supercomplexes (SCs) in the inner mitochondrial membrane with NADH-ubiquinone oxidoreductase (complex I, CI) and ubiquinol-cytochrome c oxidoreductase (cytochrome b-c1 complex, complex III, CIII), resulting in different assemblies (supercomplex SCI(1)III(2)IV(1) and megacomplex MCI(2)III(2)IV(2)).

It is found in the mitochondrion inner membrane. It functions in the pathway energy metabolism; oxidative phosphorylation. In terms of biological role, component of the cytochrome c oxidase, the last enzyme in the mitochondrial electron transport chain which drives oxidative phosphorylation. The respiratory chain contains 3 multisubunit complexes succinate dehydrogenase (complex II, CII), ubiquinol-cytochrome c oxidoreductase (cytochrome b-c1 complex, complex III, CIII) and cytochrome c oxidase (complex IV, CIV), that cooperate to transfer electrons derived from NADH and succinate to molecular oxygen, creating an electrochemical gradient over the inner membrane that drives transmembrane transport and the ATP synthase. Cytochrome c oxidase is the component of the respiratory chain that catalyzes the reduction of oxygen to water. Electrons originating from reduced cytochrome c in the intermembrane space (IMS) are transferred via the dinuclear copper A center (CU(A)) of subunit 2 and heme A of subunit 1 to the active site in subunit 1, a binuclear center (BNC) formed by heme A3 and copper B (CU(B)). The BNC reduces molecular oxygen to 2 water molecules using 4 electrons from cytochrome c in the IMS and 4 protons from the mitochondrial matrix. This chain is Cytochrome c oxidase subunit 8B, mitochondrial (Cox8b), found in Rattus norvegicus (Rat).